Reading from the N-terminus, the 422-residue chain is Putidaredoxin reductase CamA (422 aa).

FAD contacts are provided by Ala15, Asp37, Lys50, Val83, and Arg134. 156–165 contacts NAD(+); sequence GGGYIGLEVA. The FAD site is built by Asp284 and Val302.

Belongs to the FAD-dependent oxidoreductase family. In terms of assembly, homodimer or monomer. Requires FAD as cofactor.

It carries out the reaction 2 reduced [2Fe-2S]-[putidaredoxin] + NAD(+) + H(+) = 2 oxidized [2Fe-2S]-[putidaredoxin] + NADH. It participates in terpene metabolism; (R)-camphor degradation. In terms of biological role, the oxidation of camphor by cytochrome P450-CAM CamC requires the participation of the flavoprotein, putidaredoxin reductase CamA, and the iron-sulfur protein, putidaredoxin CamB, to mediate the transfer of electrons from NADH to P450 for oxygen activation. The sequence is that of Putidaredoxin reductase CamA from Pseudomonas putida (Arthrobacter siderocapsulatus).